A 2776-amino-acid polypeptide reads, in one-letter code: MKLSPQQAPLYGDCVVTVLLAEEDKVEDDAIFYLIFSGSTLYHCTSTRKVSSDTLETIAPGHDCCETVKVLLCASREGLPVFVVAEEDFHFVQDEAYDAAQFLATSAGNQQALNFTRFLDRSGPPSRDVNSLDEKVALAFRHLKLPAEWNVLGTDHTLHDGGPRETLMHFAVRLGLLRLTWFLLQKPGGRGALSIHNKEGATPVSLALERGYHELHQLLTEENAGEPDSWSSLSYEIPYGDCSVRHHRELDIYTLTSESESHREPHGDSCTGHISKLMNIQQQLMKTNLKQMDNLMPLMVTAQDSSCVPSVPETDGLFLPCVPEPSDHQHPPFEETKSTLCCQRSPGRMAESSCDLSSMVEEENVICSHKKNKDVGRKGEEAEPASAMDSGSASHQDSCLQSVPDCGVKGREGLPSCGNRNEVTGTNYSGVATCQQPLSSRSSVLQDAMVTEPDACQHSSGRELPDSSSTDVGAPEKAGELEHSLLTPDATTQNNKPQVGEGTKERLENSDSSTTETTAVQVLSEPMEKADITNHVFATSAVGVNTPAEASPALSSEEIPTEKPGMETQERGCEGGTTSDQSSPVLPAAAIENKVLGGQEPDTSIAGFCKTASPLDLTMPGPSSDGMPEQNSESHARPAQSLSGQALLCSTAEAGTPSAEATHQPSTVTSSGRLEECGSGKASLPESTMVQPSTQELCTTLCPEDPQADTVTSDTVKNTQKSVGVCHLCVSDAKNQGNGLKQDTPLTNVLEDVPRLPSVVSQTEKELAPDQVSPPASSFSLASSPESESVTKDDALSLVPSQKEKGTATPQLHRTTACRDGPDGRDLSDTDKVGDGATDPPPSSAVELRTSMGNTSPVGIGGEQEGSSPTATLEVLSDSLLHNVDKAALVSDFTLPEEGVSVVVPESSTALGQDGKDRAMSCSSVKEDVHSSEMSREDQRTPPSGQEIPGLCEKPMSALCAEEKAQQHTPSACLKTETKDIKEVAPQVSLLTEGGAAKSLVPPRTSLSADSKQKASSTEQSGSSLLPSGLPGASEALHCNQPSALDVVVENTQFQGETNACEVSRSAMEDVTVADASPATAEPRKKDASHCIKDIPISELLNQEKQMTPSLPEAFLDKGVTDLQEVITPEIEPLDCKRETLEGTDLNCATSNSKETPIEKPMQPLARDLPTETGLSVINNNVPQADMKQVAQASIPAEESNATTVSTQAADVPTRADSIEETATRIVEAVIRQVRASNALMAKVETQNPSLSSPETKQLENAYTESACAFLPGETPQIEKTHEDTTGQCGAETEEPEKIILPESAPGKQGKMPDTRTGDEVDLLSRISAASEEEAVGNGAATPKMKQGPGTQAINRESWCAIEPCPEAASLLASKQSSECRSFIDVGLGTECASKEGMLQRVSGSESDLFHSPSDEMDSIIFPKPEEEQLLCDTTGSSSSTDDTASLDRHSSHGSDVSLPQTSKLNRSRNHQSANGFFSPGVEAPESRESESEPAGSGEMEEEEMDSITEVPANCSFLRSSMRSLSPFRRHSWGPGKNAASDAEMNQRSSMRALGHVVRRPPIHRRSFSLEGLTGGGVGNKPSSSLEMSSANSSELRNPFGGEEQRNSLMSLSEEHLEPDQRQHHRMFDQQTCYRSKQQGFNYCTSAISSPLTKSISLMTISHPGLDSSRPFHSTSANLTESITEENCNFLPPSPSKKNFEEKSGTKVSRTFSYIRNKMSSSKKSKEKEKEKDKIKEKEKDSKEKEKDKKTLNGHTFSPIPIVGPISCSQCMKPFTNKDAYTCAGCGAFVHKGCRENLASCAKVKMKQPKGSLQAHDTSSLPTVIMRNKSSQPKERPRSAVLLADEATAAPMFTNRRSQQSVSLSKSVSIQNITGVGNDENMSNTWKFLSHSTDSLNKICKVNESTESLTDEGVGTDMNEGQLMGDFESDSKQLEAESWSRTVDSKFLKQQKKDVVKRQEVIYELMQTELHHIRTLKIMSDVYSRGMMTDLLFEQQMVEKLFPCLDELISIHSQFFQRILERKKESLVDKSEKNFLIKRIGDVLVSQFSGESAERLKKTYGKFCGQHNQSVNYFKDLYTKDKRFQAFVKKKMSSSVVRRLGIPECILLVTQRITKYPVLFQRILQCTKDNEVEQEDLTQSLSLVKDVIGAVDSKVASYEKKVRLGEIYTKTDSKSIMRMKSGQMFAKEDLRRKKLVRDGSVFLKSTTGRLKEVQAVLLTDILVFLQEKDQKYVFASLDHKSTVISLKKLIVREVAHEEKGLFLISMGVKDPEMVEVHASSREERNSWIQIIQDTINSLNRDEDEGIPSENEEEKKLLDTKARELKEQLQQKDQQILLLLEEKEMIFRDMTECSTPLPEDCSPTHSPRVLFRSNTEEALKGGPLMKSAINEVEILQSLVSGSLGGTLGQSISSPVEQEVMAAPISLPRRAETFGGFDCHQMNASKGGEKEEGDDGQDLRRTESDSGLKKGGNGNLVFMLKRNSEQVVQSIVHLHELLSMLQGVVLQQDSYIEDQKLVLTEKVLTRSASRPSSLIEQEKQRSLEKQRQDLANLQKQQAQHLEEKRRREREWEAREQELRDREAKLAEREETVRRRQQDLERDREELQQKKGTYQCDLERLRAAQKQLEREQEQLRRDTERLSQRQMDQNLCQVSNKHGRLMRIPSFLPNSDEFSSPSAPSVTKSGSLDSELSVSPKRNSISRTQKDKGPFHILGSASQTKVPEGQSQAPSSTSTSTRLFGLSKPKEKKEKKKKSKGSRTQPGDGPASEVPAEGEEIFC.

Disordered stretches follow at residues 371-401 (KNKD…SCLQ), 452-518 (EPDA…TETT), 547-584 (PAEA…QSSP), 618-641 (TMPG…PAQS), 653-689 (EAGT…ESTM), 760-871 (VSQT…SPTA), 910-951 (ALGQ…IPGL), 995-1029 (GAAK…LPSG), 1431-1508 (LCDT…MDSI), 1527-1546 (PFRR…AEMN), and 1565-1603 (RRSF…FGGE). Positions 389-401 (DSGSASHQDSCLQ) are enriched in polar residues. Positions 493 to 515 (QNNKPQVGEGTKERLENSDSSTT) are important for interaction with PRKAR2A. Over residues 560–573 (PTEKPGMETQERGC) the composition is skewed to basic and acidic residues. The segment covering 659-672 (AEATHQPSTVTSSG) has biased composition (polar residues). The span at 773–788 (SPPASSFSLASSPESE) shows a compositional bias: low complexity. Residue serine 784 is modified to Phosphoserine. Phosphothreonine is present on threonine 809. Basic and acidic residues-rich tracts occupy residues 820 to 834 (DGPD…DKVG) and 914 to 940 (DGKD…EDQR). Threonine 941 is subject to Phosphothreonine. Polar residues predominate over residues 1005–1020 (TSLSADSKQKASSTEQ). Positions 1433–1444 (DTTGSSSSTDDT) are enriched in low complexity. The segment covering 1454-1476 (GSDVSLPQTSKLNRSRNHQSANG) has biased composition (polar residues). Phosphoserine is present on residues serine 1455, serine 1473, serine 1507, serine 1532, and serine 1569. The tract at residues 1552–1678 (RALGHVVRRP…SRPFHSTSAN (127 aa)) is important for interaction with MAP2K3. Over residues 1583–1594 (SSSLEMSSANSS) the composition is skewed to low complexity. Phosphoserine is present on residues serine 1608, serine 1611, and serine 1613. Lysine 1637 carries the N6-methyllysine modification. The segment at 1711-1756 (TFSYIRNKMSSSKKSKEKEKEKDKIKEKEKDSKEKEKDKKTLNGHT) is disordered. Basic and acidic residues predominate over residues 1724-1751 (KSKEKEKEKDKIKEKEKDSKEKEKDKKT). The segment at 1754–1801 (GHTFSPIPIVGPISCSQCMKPFTNKDAYTCAGCGAFVHKGCRENLASC) adopts a Phorbol-ester/DAG-type zinc-finger fold. Serine 1839, serine 1858, and serine 1892 each carry phosphoserine. Positions 1882–2776 (MSNTWKFLSH…VPAEGEEIFC (895 aa)) are interaction with ESR1. Position 1893 is a phosphothreonine (threonine 1893). Phosphoserine occurs at positions 1895 and 1908. The 198-residue stretch at 1957–2154 (KRQEVIYELM…KDVIGAVDSK (198 aa)) folds into the DH domain. The 103-residue stretch at 2194–2296 (KLVRDGSVFL…WIQIIQDTIN (103 aa)) folds into the PH domain. Phosphoserine is present on residues serine 2308 and serine 2361. A coiled-coil region spans residues 2308–2345 (SENEEEKKLLDTKARELKEQLQQKDQQILLLLEEKEMI). Threonine 2431 is subject to Phosphothreonine. A disordered region spans residues 2436–2471 (DCHQMNASKGGEKEEGDDGQDLRRTESDSGLKKGGN). Residues 2455–2466 (QDLRRTESDSGL) are compositionally biased toward basic and acidic residues. Phosphoserine is present on residues serine 2527 and serine 2530. The stretch at 2532–2646 (LIEQEKQRSL…ERLSQRQMDQ (115 aa)) forms a coiled coil. 2 disordered regions span residues 2549–2605 (ANLQ…EELQ) and 2626–2776 (EREQ…EIFC). 2 stretches are compositionally biased toward basic and acidic residues: residues 2558–2605 (HLEE…EELQ) and 2626–2640 (EREQ…ERLS). 3 stretches are compositionally biased toward polar residues: residues 2641-2653 (QRQM…QVSN), 2665-2700 (LPNS…SISR), and 2713-2727 (SASQ…SQAP). Phosphoserine occurs at positions 2673 and 2692.

In terms of assembly, interacts with the cAMP-dependent protein kinase (PKA) holoenzyme and with the regulatory subunit PRKAR2A. Interacts with RHOA. Also interacts with RHOB and RHOC. Identified in a ternary complex with RHOA and PRKAR2A. Identified in a complex with NR3C1 and RHOA. Interacts with BRAF and KSR1. Identified in a complex with BRAF and KSR1. Component of a signaling complex containing at least AKAP13, PKN1, MAPK14, ZAK and MAP2K3. Within this complex, AKAP13 interacts directly with PKN1, which in turn recruits MAPK14, MAP2K3 and ZAK. Interacts (phosphorylated form) with YWHAB and YWHAZ. Interaction with YWHAB inhibits activation of RHOA, interferes with PKN1 binding and activation of MAP kinases. Interacts with GNA12. Interacts with IKBKB. Interacts with ESR1, THRA, PPARA and NME2. Interacts (via the C-terminal domain after the PH domain) with MEF2C and RXRB. Interacts (via the C-terminal domain after the PH domain) with PRKD1. As to expression, detected in embryonic heart, limb bud, first branchial arch and forebrain (at protein level). Detected in heart. Detected in perichondrium, but not in the bone growth plate.

It is found in the cytoplasm. The protein localises to the cytosol. Its subcellular location is the cell cortex. The protein resides in the cytoskeleton. It localises to the nucleus. It is found in the membrane. Scaffold protein that plays an important role in assembling signaling complexes downstream of several types of G protein-coupled receptors. Activates RHOA in response to signaling via G protein-coupled receptors via its function as Rho guanine nucleotide exchange factor. May also activate other Rho family members. Part of a kinase signaling complex that links ADRA1A and ADRA1B adrenergic receptor signaling to the activation of downstream p38 MAP kinases, such as MAPK11 and MAPK14. Part of a signaling complex that links ADRA1B signaling to the activation of RHOA and IKBKB/IKKB, leading to increased NF-kappa-B transcriptional activity. Part of a RHOA-dependent signaling cascade that mediates responses to lysophosphatidic acid (LPA), a signaling molecule that activates G-protein coupled receptors and potentiates transcriptional activation of the glucocorticoid receptor NR3C1. Part of a signaling cascade that stimulates MEF2C-dependent gene expression in response to lysophosphatidic acid (LPA). Part of a signaling pathway that activates MAPK11 and/or MAPK14 and leads to increased transcription activation of the estrogen receptors ESR1 and ESR2. Part of a signaling cascade that links cAMP and EGFR signaling to BRAF signaling and to PKA-mediated phosphorylation of KSR1, leading to the activation of downstream MAP kinases, such as MAPK1 or MAPK3. Functions as a scaffold protein that anchors cAMP-dependent protein kinase (PKA) and PRKD1. This promotes activation of PRKD1, leading to increased phosphorylation of HDAC5 and ultimately cardiomyocyte hypertrophy. Has no guanine nucleotide exchange activity on CDC42, Ras or Rac. Required for normal embryonic heart development, and in particular for normal sarcomere formation in the developing cardiomyocytes. Plays a role in cardiomyocyte growth and cardiac hypertrophy in response to activation of the beta-adrenergic receptor by phenylephrine or isoproterenol. Required for normal adaptive cardiac hypertrophy in response to pressure overload. Plays a role in osteogenesis. This is A-kinase anchor protein 13 from Mus musculus (Mouse).